The primary structure comprises 846 residues: Protein arginine N-methyltransferase 9 (846 aa).

TPR repeat units follow at residues 25-58, 67-100, and 101-134; these read VARS…APEL, QYTL…FPDD, and EVIC…NPDF. SAM-dependent MTase PRMT-type domains lie at 137 to 466 and 530 to 846; these read AKEN…YLRI and NIPY…AVKP.

The protein belongs to the class I-like SAM-binding methyltransferase superfamily. Protein arginine N-methyltransferase family. As to quaternary structure, found in a complex with PRMT9, SF3B2 and SF3B4. Interacts with SF3B2.

Its subcellular location is the cytoplasm. It carries out the reaction L-arginyl-[protein] + 2 S-adenosyl-L-methionine = N(omega),N(omega)'-dimethyl-L-arginyl-[protein] + 2 S-adenosyl-L-homocysteine + 2 H(+). Functionally, arginine methyltransferase that can both catalyze the formation of omega-N monomethylarginine (MMA) and symmetrical dimethylarginine (sDMA). Specifically mediates the symmetrical dimethylation of SF3B2. Involved in the regulation of alternative splicing of pre-mRNA. The sequence is that of Protein arginine N-methyltransferase 9 (Prmt9) from Mus musculus (Mouse).